Consider the following 597-residue polypeptide: Protein kinase C-like 3 (597 aa).

The region spanning 12–95 is the PB1 domain; the sequence is DIKLKTRFHG…AELNIHVFVG (84 aa). The Phorbol-ester/DAG-type zinc finger occupies 127-177; the sequence is GHRFQGKRLNRRIQCFICHDYIWGIGRQGFRCVDCRLCVHKKCHRHVRTHC. The disordered stretch occupies residues 181 to 238; that stretch reads PQGPNVPVAPSSGVGSLRGGRLDTSSSTTRSGGGIDNGAFHEHEIESPGSAKDMSRST. A Protein kinase domain is found at 253–522; that stretch reads FRLLTVIGRG…LNDMKEHDFF (270 aa). ATP is bound by residues 259 to 267 and Lys282; that span reads IGRGSYAKV. Asp377 (proton acceptor) is an active-site residue. The 72-residue stretch at 524-595 folds into the AGC-kinase C-terminal domain; it reads GFIDWEALEQ…VNPLQMSRED (72 aa).

The protein belongs to the protein kinase superfamily. AGC Ser/Thr protein kinase family. PKC subfamily. In terms of assembly, interaction with par-3 required for the peripheral localization of par-6 and to form a par-3/par-6/pkc-3 complex, which is activated when cdc-42 interacts with par-6. Binds avidly to the phosphotyrosine interaction domain (PID) of a novel pkc-3 adapter protein num-1, which enables tethering and targeting of pkc-3 to the cell periphery. Requires Mg(2+) as cofactor.

The protein resides in the cytoplasm. Its subcellular location is the cytoskeleton. It catalyses the reaction L-seryl-[protein] + ATP = O-phospho-L-seryl-[protein] + ADP + H(+). It carries out the reaction L-threonyl-[protein] + ATP = O-phospho-L-threonyl-[protein] + ADP + H(+). Required for the normal progression of embryogenesis and viability of the organism. Plays an indispensable role in establishing embryonic polarity and in recruiting and maintaining par-6 to the periphery, through interaction with par-3. Required for epithelial cell polarity in the distal spermatheca. Phosphorylates serine residues of num-1. Required for the expression of antimicrobial peptide nlp-29 in response in response to fungal infection or physical injury. This chain is Protein kinase C-like 3, found in Caenorhabditis briggsae.